The chain runs to 106 residues: UPF0060 membrane protein Csal_2746 (106 aa).

The next 4 helical transmembrane spans lie at 6–26, 31–51, 59–79, and 85–105; these read LLFIATAMAEIIGCYLPWLWL, SPWLLVPAAASLTLFVWLLSL, VYAAYGGVYVVCALVWLWGVD, and PTDWIGAALALTGMGVIASGW.

This sequence belongs to the UPF0060 family.

The protein resides in the cell inner membrane. The sequence is that of UPF0060 membrane protein Csal_2746 from Chromohalobacter salexigens (strain ATCC BAA-138 / DSM 3043 / CIP 106854 / NCIMB 13768 / 1H11).